The sequence spans 232 residues: 2,3-bisphosphoglycerate-dependent phosphoglycerate mutase (232 aa).

Substrate-binding positions include 10–17 (RHGESQWN), 23–24 (TG), R62, 89–92 (ERHY), K100, 116–117 (RR), and 185–186 (GN). H11 acts as the Tele-phosphohistidine intermediate in catalysis. The active-site Proton donor/acceptor is the E89.

Belongs to the phosphoglycerate mutase family. BPG-dependent PGAM subfamily. Homodimer.

The enzyme catalyses (2R)-2-phosphoglycerate = (2R)-3-phosphoglycerate. The protein operates within carbohydrate degradation; glycolysis; pyruvate from D-glyceraldehyde 3-phosphate: step 3/5. Functionally, catalyzes the interconversion of 2-phosphoglycerate and 3-phosphoglycerate. This is 2,3-bisphosphoglycerate-dependent phosphoglycerate mutase from Blochmanniella floridana.